Here is a 200-residue protein sequence, read N- to C-terminus: Pyridoxal 5'-phosphate synthase subunit PdxT (200 aa).

52-54 (GES) contacts L-glutamine. Residue cysteine 84 is the Nucleophile of the active site. L-glutamine is bound by residues arginine 116 and 145–146 (IR). Residues histidine 181 and glutamate 183 each act as charge relay system in the active site.

Belongs to the glutaminase PdxT/SNO family. In the presence of PdxS, forms a dodecamer of heterodimers. Only shows activity in the heterodimer.

The catalysed reaction is aldehydo-D-ribose 5-phosphate + D-glyceraldehyde 3-phosphate + L-glutamine = pyridoxal 5'-phosphate + L-glutamate + phosphate + 3 H2O + H(+). The enzyme catalyses L-glutamine + H2O = L-glutamate + NH4(+). Its pathway is cofactor biosynthesis; pyridoxal 5'-phosphate biosynthesis. Functionally, catalyzes the hydrolysis of glutamine to glutamate and ammonia as part of the biosynthesis of pyridoxal 5'-phosphate. The resulting ammonia molecule is channeled to the active site of PdxS. This chain is Pyridoxal 5'-phosphate synthase subunit PdxT, found in Saccharolobus solfataricus (strain ATCC 35092 / DSM 1617 / JCM 11322 / P2) (Sulfolobus solfataricus).